The primary structure comprises 235 residues: 2-C-methyl-D-erythritol 4-phosphate cytidylyltransferase (235 aa).

Belongs to the IspD/TarI cytidylyltransferase family. IspD subfamily.

It carries out the reaction 2-C-methyl-D-erythritol 4-phosphate + CTP + H(+) = 4-CDP-2-C-methyl-D-erythritol + diphosphate. It participates in isoprenoid biosynthesis; isopentenyl diphosphate biosynthesis via DXP pathway; isopentenyl diphosphate from 1-deoxy-D-xylulose 5-phosphate: step 2/6. Its function is as follows. Catalyzes the formation of 4-diphosphocytidyl-2-C-methyl-D-erythritol from CTP and 2-C-methyl-D-erythritol 4-phosphate (MEP). This Ectopseudomonas mendocina (strain ymp) (Pseudomonas mendocina) protein is 2-C-methyl-D-erythritol 4-phosphate cytidylyltransferase.